Here is a 146-residue protein sequence, read N- to C-terminus: NADH-ubiquinone oxidoreductase chain 6 (146 aa).

4 consecutive transmembrane segments (helical) span residues 10 to 30, 41 to 61, 75 to 95, and 124 to 144; these read LTAIGMLTPVQSMTCLMILFV, FVLMGMLYVTMYVGAMAMLFL, GTITPLMVTLLAMCLMPLDIT, and AMLLMLTGMMLMLSVMGAMSI.

It belongs to the complex I subunit 6 family.

Its subcellular location is the mitochondrion membrane. The catalysed reaction is a ubiquinone + NADH + 5 H(+)(in) = a ubiquinol + NAD(+) + 4 H(+)(out). In terms of biological role, core subunit of the mitochondrial membrane respiratory chain NADH dehydrogenase (Complex I) that is believed to belong to the minimal assembly required for catalysis. Complex I functions in the transfer of electrons from NADH to the respiratory chain. The immediate electron acceptor for the enzyme is believed to be ubiquinone. The chain is NADH-ubiquinone oxidoreductase chain 6 (ND6) from Debaryomyces hansenii (strain ATCC 36239 / CBS 767 / BCRC 21394 / JCM 1990 / NBRC 0083 / IGC 2968) (Yeast).